The following is a 97-amino-acid chain: Large ribosomal subunit protein uL23 (97 aa).

It belongs to the universal ribosomal protein uL23 family. Part of the 50S ribosomal subunit. Contacts protein L29, and trigger factor when it is bound to the ribosome.

Its function is as follows. One of the early assembly proteins it binds 23S rRNA. One of the proteins that surrounds the polypeptide exit tunnel on the outside of the ribosome. Forms the main docking site for trigger factor binding to the ribosome. The polypeptide is Large ribosomal subunit protein uL23 (Acidithiobacillus ferrooxidans (strain ATCC 23270 / DSM 14882 / CIP 104768 / NCIMB 8455) (Ferrobacillus ferrooxidans (strain ATCC 23270))).